The sequence spans 417 residues: Serine hydroxymethyltransferase (417 aa).

(6S)-5,6,7,8-tetrahydrofolate is bound by residues Leu-121 and 125–127; that span reads GHL. The residue at position 229 (Lys-229) is an N6-(pyridoxal phosphate)lysine. 354–356 lines the (6S)-5,6,7,8-tetrahydrofolate pocket; it reads SPF.

The protein belongs to the SHMT family. As to quaternary structure, homodimer. Requires pyridoxal 5'-phosphate as cofactor.

The protein resides in the cytoplasm. It catalyses the reaction (6R)-5,10-methylene-5,6,7,8-tetrahydrofolate + glycine + H2O = (6S)-5,6,7,8-tetrahydrofolate + L-serine. It functions in the pathway one-carbon metabolism; tetrahydrofolate interconversion. It participates in amino-acid biosynthesis; glycine biosynthesis; glycine from L-serine: step 1/1. In terms of biological role, catalyzes the reversible interconversion of serine and glycine with tetrahydrofolate (THF) serving as the one-carbon carrier. This reaction serves as the major source of one-carbon groups required for the biosynthesis of purines, thymidylate, methionine, and other important biomolecules. Also exhibits THF-independent aldolase activity toward beta-hydroxyamino acids, producing glycine and aldehydes, via a retro-aldol mechanism. The sequence is that of Serine hydroxymethyltransferase from Dichelobacter nodosus (strain VCS1703A).